We begin with the raw amino-acid sequence, 666 residues long: tRNA 5-methylaminomethyl-2-thiouridine biosynthesis bifunctional protein MnmC (666 aa).

Residues Met1–Glu245 are tRNA (mnm(5)s(2)U34)-methyltransferase. The FAD-dependent cmnm(5)s(2)U34 oxidoreductase stretch occupies residues Ile270–Lys666.

In the N-terminal section; belongs to the methyltransferase superfamily. tRNA (mnm(5)s(2)U34)-methyltransferase family. It in the C-terminal section; belongs to the DAO family. Requires FAD as cofactor.

It localises to the cytoplasm. The catalysed reaction is 5-aminomethyl-2-thiouridine(34) in tRNA + S-adenosyl-L-methionine = 5-methylaminomethyl-2-thiouridine(34) in tRNA + S-adenosyl-L-homocysteine + H(+). Catalyzes the last two steps in the biosynthesis of 5-methylaminomethyl-2-thiouridine (mnm(5)s(2)U) at the wobble position (U34) in tRNA. Catalyzes the FAD-dependent demodification of cmnm(5)s(2)U34 to nm(5)s(2)U34, followed by the transfer of a methyl group from S-adenosyl-L-methionine to nm(5)s(2)U34, to form mnm(5)s(2)U34. In Salmonella paratyphi B (strain ATCC BAA-1250 / SPB7), this protein is tRNA 5-methylaminomethyl-2-thiouridine biosynthesis bifunctional protein MnmC.